A 354-amino-acid chain; its full sequence is VSHVTVPSEGVMPSPLSLCRYLPRELSPSVDSRSCSIPLVAPRKAGKLFLGTTPPRAPGLPRRLAWFSIDWEQVCLMHRLGSGGFGSVYKATYHGVPVAIKQVNKCTEDLRASQRSFWAELNIAGLRHDNIVRVVAASTRTPEDSNSLGTIIMEFGGNVTLHQVIYDATRSPEPLSCRKQLSLGKCLKYSLDVVNGLLFLHSQSILHLDLKPANILISEQDVCKISDFGCSQKLQVLRGRQASPPHIGGTYTHQAPEILKGEIATPKADIYSFGITLWQMTTREVPYSGEPQYVQYAVVAYNLRPSLAGAVFTASLTGKALQNIIQSCWEARGLQRPSAELLQRDLKAFRGTLG.

Positions 74–350 (VCLMHRLGSG…LLQRDLKAFR (277 aa)) constitute a Protein kinase domain. ATP-binding positions include 80–88 (LGSGGFGSV) and Lys101. Catalysis depends on Asp209, which acts as the Proton acceptor.

It belongs to the protein kinase superfamily. Ser/Thr protein kinase family.

The enzyme catalyses L-seryl-[protein] + ATP = O-phospho-L-seryl-[protein] + ADP + H(+). It catalyses the reaction L-threonyl-[protein] + ATP = O-phospho-L-threonyl-[protein] + ADP + H(+). The protein is Serine/threonine-protein kinase-transforming protein mos (V-MOS) of Moloney murine sarcoma virus (strain ts110) (MoMSV).